Consider the following 410-residue polypeptide: Elongation factor Tu, chloroplastic (410 aa).

Positions 10–213 (KPHLNIGTIG…TVDEYIPTPK (204 aa)) constitute a tr-type G domain. Positions 19–26 (GHVDHGKT) are G1. 19 to 26 (GHVDHGKT) serves as a coordination point for GTP. Threonine 26 contributes to the Mg(2+) binding site. The interval 60-64 (GITIN) is G2. Residues 81 to 84 (DCPG) are G3. Residues 81-85 (DCPGH) and 136-139 (NKAD) each bind GTP. A G4 region spans residues 136 to 139 (NKAD). The interval 174-176 (SAI) is G5.

It belongs to the TRAFAC class translation factor GTPase superfamily. Classic translation factor GTPase family. EF-Tu/EF-1A subfamily.

The protein localises to the plastid. It localises to the chloroplast. The catalysed reaction is GTP + H2O = GDP + phosphate + H(+). Functionally, GTP hydrolase that promotes the GTP-dependent binding of aminoacyl-tRNA to the A-site of ribosomes during protein biosynthesis. In Codium fragile (Dead man's fingers), this protein is Elongation factor Tu, chloroplastic (tufA).